The chain runs to 348 residues: WD repeat-containing protein JIP5 (348 aa).

WD repeat units lie at residues 5-44 (KLKN…GETS), 51-90 (PSKR…MTRE), 94-132 (AHEC…SIRT), 135-174 (QHFD…STPL), 179-218 (DQED…ADSV), 223-261 (GHPA…FLGV), and 264-304 (THEE…EDSD). Residues 299-318 (LFEDSDEDDEMEEDEPDSDE) are compositionally biased toward acidic residues. Residues 299-348 (LFEDSDEDDEMEEDEPDSDEEKSKKKKKDNGMKDMSRGQAENDGSFFADL) are disordered.

This sequence belongs to the WD repeat WDR55 family.

It localises to the nucleus. It is found in the nucleolus. In Cryptococcus neoformans var. neoformans serotype D (strain JEC21 / ATCC MYA-565) (Filobasidiella neoformans), this protein is WD repeat-containing protein JIP5 (JIP5).